A 284-amino-acid polypeptide reads, in one-letter code: Acetyl-coenzyme A carboxylase carboxyl transferase subunit beta (284 aa).

One can recognise a CoA carboxyltransferase N-terminal domain in the interval 25–284; the sequence is MWVKCPGCSA…ILGILYRPAA (260 aa). Residues Cys-29, Cys-32, Cys-48, and Cys-51 each coordinate Zn(2+). A C4-type zinc finger spans residues 29 to 51; the sequence is CPGCSATLLAKDLDANLNVCPTC.

This sequence belongs to the AccD/PCCB family. As to quaternary structure, acetyl-CoA carboxylase is a heterohexamer composed of biotin carboxyl carrier protein (AccB), biotin carboxylase (AccC) and two subunits each of ACCase subunit alpha (AccA) and ACCase subunit beta (AccD). It depends on Zn(2+) as a cofactor.

It is found in the cytoplasm. The catalysed reaction is N(6)-carboxybiotinyl-L-lysyl-[protein] + acetyl-CoA = N(6)-biotinyl-L-lysyl-[protein] + malonyl-CoA. The protein operates within lipid metabolism; malonyl-CoA biosynthesis; malonyl-CoA from acetyl-CoA: step 1/1. Functionally, component of the acetyl coenzyme A carboxylase (ACC) complex. Biotin carboxylase (BC) catalyzes the carboxylation of biotin on its carrier protein (BCCP) and then the CO(2) group is transferred by the transcarboxylase to acetyl-CoA to form malonyl-CoA. This Pelobacter propionicus (strain DSM 2379 / NBRC 103807 / OttBd1) protein is Acetyl-coenzyme A carboxylase carboxyl transferase subunit beta.